Here is a 191-residue protein sequence, read N- to C-terminus: Pyridoxal 5'-phosphate synthase subunit PdxT (191 aa).

Position 48–50 (48–50 (GES)) interacts with L-glutamine. The active-site Nucleophile is Cys79. L-glutamine contacts are provided by residues Arg106 and 134 to 135 (IR). Active-site charge relay system residues include His170 and Glu172.

This sequence belongs to the glutaminase PdxT/SNO family. As to quaternary structure, in the presence of PdxS, forms a dodecamer of heterodimers. Only shows activity in the heterodimer.

The enzyme catalyses aldehydo-D-ribose 5-phosphate + D-glyceraldehyde 3-phosphate + L-glutamine = pyridoxal 5'-phosphate + L-glutamate + phosphate + 3 H2O + H(+). It catalyses the reaction L-glutamine + H2O = L-glutamate + NH4(+). The protein operates within cofactor biosynthesis; pyridoxal 5'-phosphate biosynthesis. Functionally, catalyzes the hydrolysis of glutamine to glutamate and ammonia as part of the biosynthesis of pyridoxal 5'-phosphate. The resulting ammonia molecule is channeled to the active site of PdxS. The chain is Pyridoxal 5'-phosphate synthase subunit PdxT from Oenococcus oeni (strain ATCC BAA-331 / PSU-1).